Reading from the N-terminus, the 181-residue chain is MESGFKASLKDAIRTIPDYPKPGVQFRDVTTLMGDAQAFRRSVDELVYPYAGNKVDKVAGIEARGFILGGAIAHQLSAGFVPIRKKGKLPRDTVRIAYSLEYGIDEMEMHRDAIEKGERIILVDDLIATGGTAEAAAKLLLQMGAEIVAACFIIDLPDLGGRKKLEALGVPVRTLVAFEGD.

Belongs to the purine/pyrimidine phosphoribosyltransferase family. In terms of assembly, homodimer.

The protein localises to the cytoplasm. It carries out the reaction AMP + diphosphate = 5-phospho-alpha-D-ribose 1-diphosphate + adenine. It participates in purine metabolism; AMP biosynthesis via salvage pathway; AMP from adenine: step 1/1. Functionally, catalyzes a salvage reaction resulting in the formation of AMP, that is energically less costly than de novo synthesis. This chain is Adenine phosphoribosyltransferase, found in Brucella anthropi (strain ATCC 49188 / DSM 6882 / CCUG 24695 / JCM 21032 / LMG 3331 / NBRC 15819 / NCTC 12168 / Alc 37) (Ochrobactrum anthropi).